Reading from the N-terminus, the 370-residue chain is Peptide chain release factor 2 (370 aa).

Gln249 is modified (N5-methylglutamine).

Belongs to the prokaryotic/mitochondrial release factor family. Post-translationally, methylated by PrmC. Methylation increases the termination efficiency of RF2.

Its subcellular location is the cytoplasm. Its function is as follows. Peptide chain release factor 2 directs the termination of translation in response to the peptide chain termination codons UGA and UAA. This Kosmotoga olearia (strain ATCC BAA-1733 / DSM 21960 / TBF 19.5.1) protein is Peptide chain release factor 2.